A 339-amino-acid chain; its full sequence is Fe-S cluster assembly protein DRE2 (339 aa).

The interval Met-1–Val-157 is N-terminal SAM-like domain. Residues Gly-158–Leu-206 are linker. 4 residues coordinate [2Fe-2S] cluster: Cys-221, Cys-233, Cys-236, and Cys-238. The interval Cys-221–Cys-238 is fe-S binding site A. Residues Cys-302, Cys-305, Cys-313, and Cys-316 each contribute to the [4Fe-4S] cluster site. 2 consecutive short sequence motifs (cx2C motif) follow at residues Cys-302–Cys-305 and Cys-313–Cys-316. The tract at residues Cys-302–Cys-316 is fe-S binding site B.

The protein belongs to the anamorsin family. As to quaternary structure, monomer. Interacts with TAH18. Interacts with MIA40. The cofactor is [2Fe-2S] cluster. Requires [4Fe-4S] cluster as cofactor.

The protein localises to the cytoplasm. The protein resides in the mitochondrion intermembrane space. Its function is as follows. Component of the cytosolic iron-sulfur (Fe-S) protein assembly (CIA) machinery required for the maturation of extramitochondrial Fe-S proteins. Part of an electron transfer chain functioning in an early step of cytosolic Fe-S biogenesis, facilitating the de novo assembly of a [4Fe-4S] cluster on the scaffold complex CFD1-NBP35. Electrons are transferred to DRE2 from NADPH via the FAD- and FMN-containing protein TAH18. TAH18-DRE2 are also required for the assembly of the diferric tyrosyl radical cofactor of ribonucleotide reductase (RNR), probably by providing electrons for reduction during radical cofactor maturation in the catalytic small subunit RNR2. The polypeptide is Fe-S cluster assembly protein DRE2 (Debaryomyces hansenii (strain ATCC 36239 / CBS 767 / BCRC 21394 / JCM 1990 / NBRC 0083 / IGC 2968) (Yeast)).